The sequence spans 164 residues: Protein-export protein SecB (164 aa).

Belongs to the SecB family. In terms of assembly, homotetramer, a dimer of dimers. One homotetramer interacts with 1 SecA dimer.

It localises to the cytoplasm. Functionally, one of the proteins required for the normal export of preproteins out of the cell cytoplasm. It is a molecular chaperone that binds to a subset of precursor proteins, maintaining them in a translocation-competent state. It also specifically binds to its receptor SecA. In Zymomonas mobilis subsp. mobilis (strain ATCC 31821 / ZM4 / CP4), this protein is Protein-export protein SecB.